A 184-amino-acid polypeptide reads, in one-letter code: GTPase RhebL1 (184 aa).

Residues 16–21 (SVGKTS), 32–38 (LEGYDPT), glycine 63, 119–122 (NKAD), and 149–150 (SA) contribute to the GTP site. Positions 35 to 43 (YDPTVENTY) match the Effector region motif. Threonine 38 lines the Mg(2+) pocket. Cysteine 181 carries the cysteine methyl ester modification. The S-farnesyl cysteine moiety is linked to residue cysteine 181. Positions 182–184 (YLM) are cleaved as a propeptide — removed in mature form.

This sequence belongs to the small GTPase superfamily. Rheb family. Interacts with MTOR.

Its subcellular location is the endomembrane system. The protein resides in the cytoplasm. The enzyme catalyses GTP + H2O = GDP + phosphate + H(+). Functionally, binds GTP and exhibits intrinsic GTPase activity. May activate NF-kappa-B-mediated gene transcription. Promotes signal transduction through MTOR, activates RPS6KB1, and is a downstream target of the small GTPase-activating proteins TSC1 and TSC2. In Mus musculus (Mouse), this protein is GTPase RhebL1 (Rhebl1).